A 447-amino-acid polypeptide reads, in one-letter code: Maintenance of mitochondrial morphology protein 1 (447 aa).

The Lumenal segment spans residues 1-109; that stretch reads MKSPNETSFT…VFSAWSFAQG (109 aa). A helical transmembrane segment spans residues 110–130; it reads LVIGQLSVIVVLIFFIKFFIF. Residues 131-447 are Cytoplasmic-facing; that stretch reads SEGPIKTEGP…DDISMKSTDL (317 aa). An SMP-LTD domain is found at 208-421; the sequence is SPETLDWFNV…EPRFQFIKLP (214 aa).

The protein belongs to the MMM1 family. As to quaternary structure, homodimer. Component of the ER-mitochondria encounter structure (ERMES) or MDM complex, composed of MMM1, MDM10, MDM12 and MDM34. An MMM1 homodimer associates with one molecule of MDM12 on each side in a pairwise head-to-tail manner, and the SMP-LTD domains of MMM1 and MDM12 generate a continuous hydrophobic tunnel for phospholipid trafficking.

It localises to the endoplasmic reticulum membrane. Its function is as follows. Component of the ERMES/MDM complex, which serves as a molecular tether to connect the endoplasmic reticulum (ER) and mitochondria. Components of this complex are involved in the control of mitochondrial shape and protein biogenesis, and function in nonvesicular lipid trafficking between the ER and mitochondria. The MDM12-MMM1 subcomplex functions in the major beta-barrel assembly pathway that is responsible for biogenesis of all outer membrane beta-barrel proteins, and acts in a late step after the SAM complex. The MDM10-MDM12-MMM1 subcomplex further acts in the TOM40-specific pathway after the action of the MDM12-MMM1 complex. Essential for establishing and maintaining the structure of mitochondria and maintenance of mtDNA nucleoids. This chain is Maintenance of mitochondrial morphology protein 1, found in Lachancea thermotolerans (strain ATCC 56472 / CBS 6340 / NRRL Y-8284) (Yeast).